Here is a 384-residue protein sequence, read N- to C-terminus: Stress response protein bis1 (384 aa).

2 disordered regions span residues 1–22 (MSLAKKIDDDEKQLVKPVNKEQ) and 344–384 (SPLH…PKRV).

This sequence belongs to the ESS2 family. In terms of assembly, heterodimer with ish1.

The protein resides in the nucleus. It localises to the cytoplasm. It is found in the cytoskeleton. The protein localises to the spindle. In terms of biological role, has a role in maintaining cell viability during stationary phase induced by stress response. May be involved in pre-mRNA splicing. This is Stress response protein bis1 (bis1) from Schizosaccharomyces pombe (strain 972 / ATCC 24843) (Fission yeast).